Consider the following 211-residue polypeptide: Uracil phosphoribosyltransferase (211 aa).

30 to 34 (KGLVR) is a GTP binding site. 5-phospho-alpha-D-ribose 1-diphosphate is bound by residues Arg-79, Arg-104, and 133–141 (DPMLATGIT). Uracil is bound by residues Ile-197 and 202-204 (GDA). Residue Asp-203 coordinates 5-phospho-alpha-D-ribose 1-diphosphate.

This sequence belongs to the UPRTase family. Mg(2+) is required as a cofactor.

It catalyses the reaction UMP + diphosphate = 5-phospho-alpha-D-ribose 1-diphosphate + uracil. Its pathway is pyrimidine metabolism; UMP biosynthesis via salvage pathway; UMP from uracil: step 1/1. Allosterically activated by GTP. In terms of biological role, catalyzes the conversion of uracil and 5-phospho-alpha-D-ribose 1-diphosphate (PRPP) to UMP and diphosphate. The polypeptide is Uracil phosphoribosyltransferase (Pyrobaculum islandicum (strain DSM 4184 / JCM 9189 / GEO3)).